The sequence spans 468 residues: 3-isopropylmalate dehydratase large subunit (468 aa).

[4Fe-4S] cluster contacts are provided by Cys-349, Cys-409, and Cys-412.

This sequence belongs to the aconitase/IPM isomerase family. LeuC type 1 subfamily. In terms of assembly, heterodimer of LeuC and LeuD. [4Fe-4S] cluster serves as cofactor.

It carries out the reaction (2R,3S)-3-isopropylmalate = (2S)-2-isopropylmalate. Its pathway is amino-acid biosynthesis; L-leucine biosynthesis; L-leucine from 3-methyl-2-oxobutanoate: step 2/4. Its function is as follows. Catalyzes the isomerization between 2-isopropylmalate and 3-isopropylmalate, via the formation of 2-isopropylmaleate. The sequence is that of 3-isopropylmalate dehydratase large subunit from Nitrobacter hamburgensis (strain DSM 10229 / NCIMB 13809 / X14).